The following is a 244-amino-acid chain: Short-chain dehydrogenase/reductase family member NovK (244 aa).

Residues 9–12 (GGGE), 59–60 (EL), and 154–158 (RPVLD) each bind NADP(+).

Belongs to the short-chain dehydrogenases/reductases (SDR) family. Heterotetramer; the NovJ(2)K(2) heterotetramer is composed of subunits of 2 NovJ and 2 subunits of NovK.

The protein operates within antibiotic biosynthesis; novobiocin biosynthesis. Non-catalytic subunit of the NovJ(2)K(2) heterotetramer that catalyzes the NADPH-dependent reduction of the tyrosyl moiety of L-beta-OH-Tyr-S-NovH intermediate to yield the tethered beta-ketotyrosyl-S-NovH in the novobiocin biosynthesis pathway. Novobiocin is an aminocoumarin family antibiotic that targets bacterial DNA gyrases. The polypeptide is Short-chain dehydrogenase/reductase family member NovK (novK) (Streptomyces niveus (Streptomyces spheroides)).